We begin with the raw amino-acid sequence, 544 residues long: Probable protein kinase UbiB (544 aa).

Residues 123 to 501 (EFDIKPLASA…KRQQATGKFL (379 aa)) enclose the Protein kinase domain. Residues 129-137 (LASASIAQV) and Lys-152 each bind ATP. Residue Asp-287 is the Proton acceptor of the active site. The next 2 helical transmembrane spans lie at 496 to 516 (ATGK…AILV) and 519 to 539 (AYEQ…LLSW).

It belongs to the ABC1 family. UbiB subfamily.

It is found in the cell inner membrane. It participates in cofactor biosynthesis; ubiquinone biosynthesis [regulation]. Its function is as follows. Is probably a protein kinase regulator of UbiI activity which is involved in aerobic coenzyme Q (ubiquinone) biosynthesis. In Vibrio parahaemolyticus serotype O3:K6 (strain RIMD 2210633), this protein is Probable protein kinase UbiB.